A 454-amino-acid polypeptide reads, in one-letter code: UPF0210 protein Memar_2269 (454 aa).

The protein belongs to the UPF0210 family.

This is UPF0210 protein Memar_2269 from Methanoculleus marisnigri (strain ATCC 35101 / DSM 1498 / JR1).